A 257-amino-acid polypeptide reads, in one-letter code: Probable pectate lyase E (257 aa).

An N-terminal signal peptide occupies residues 1–17; it reads MYQKLLLVPLLLTSALA.

This sequence belongs to the polysaccharide lyase 3 family. Ca(2+) serves as cofactor.

Its subcellular location is the secreted. The enzyme catalyses Eliminative cleavage of (1-&gt;4)-alpha-D-galacturonan to give oligosaccharides with 4-deoxy-alpha-D-galact-4-enuronosyl groups at their non-reducing ends.. Its function is as follows. Pectinolytic enzyme consist of four classes of enzymes: pectin lyase, polygalacturonase, pectin methylesterase and rhamnogalacturonase. Among pectinolytic enzymes, pectin lyase is the most important in depolymerization of pectin, since it cleaves internal glycosidic bonds of highly methylated pectins. Favors pectate, the anion, over pectin, the methyl ester. The polypeptide is Probable pectate lyase E (plyE) (Aspergillus flavus (strain ATCC 200026 / FGSC A1120 / IAM 13836 / NRRL 3357 / JCM 12722 / SRRC 167)).